A 190-amino-acid chain; its full sequence is Probable nicotinate-nucleotide adenylyltransferase (190 aa).

It belongs to the NadD family.

The enzyme catalyses nicotinate beta-D-ribonucleotide + ATP + H(+) = deamido-NAD(+) + diphosphate. It functions in the pathway cofactor biosynthesis; NAD(+) biosynthesis; deamido-NAD(+) from nicotinate D-ribonucleotide: step 1/1. Its function is as follows. Catalyzes the reversible adenylation of nicotinate mononucleotide (NaMN) to nicotinic acid adenine dinucleotide (NaAD). The sequence is that of Probable nicotinate-nucleotide adenylyltransferase from Frankia alni (strain DSM 45986 / CECT 9034 / ACN14a).